Reading from the N-terminus, the 3788-residue chain is Lysosomal-trafficking regulator (3788 aa).

Disordered regions lie at residues 148 to 180 (KSTH…TVVS) and 198 to 217 (EGHL…VLSD). At S164 the chain carries Phosphoserine. Residue T165 is modified to Phosphothreonine. The residue at position 166 (S166) is a Phosphoserine. The WD 1 repeat unit spans residues 662-700 (GPTSGLPSPSYRFQGILPSSGSEDLLWKWDALEAYQSFV). Disordered stretches follow at residues 1169–1196 (LGPG…FSEE), 1213–1240 (GYEA…EAEG), and 1482–1519 (ESAA…TESI). Positions 1213-1232 (GYEADSESNPEDVDTQDDGV) are enriched in acidic residues. 2 positions are modified to phosphoserine: S1503 and S1504. A WD 2 repeat occupies 1576–1620 (SQENIFFPSKWQHLVLTYIQHPQGKKNVHGEISIWVSGQRKTDVI). A phosphoserine mark is found at S2099, S2118, S2203, S2207, and S2254. Residues 2177–2221 (ANGVSRGSPRFPRARVDHKDVGTEPRSDDDSPGDESYPRRPDNLK) form a disordered region. Over residues 2190–2205 (ARVDHKDVGTEPRSDD) the composition is skewed to basic and acidic residues. Disordered stretches follow at residues 2556–2581 (HDSE…SIAG) and 2659–2681 (NTSQ…HHEQ). The span at 2566–2578 (SAHRHSVPPKRRS) shows a compositional bias: basic residues. The segment covering 2659–2671 (NTSQSKTSVSQTE) has biased composition (polar residues). The region spanning 2996-3102 (AASESIRVNR…VRDDVYQSIL (107 aa)) is the BEACH-type PH domain. The BEACH domain occupies 3126–3409 (QITNFEYLTH…QLFHTAHASR (284 aa)). WD repeat units lie at residues 3550–3589 (SQQH…STPS), 3601–3640 (GHTE…YVQS), 3643–3686 (GHKS…VGHV), 3687–3731 (HCRE…PVRE), and 3736–3775 (KSNK…RVKL).

As to quaternary structure, interacts with CPAP, LIP8 and ZNF521. In terms of tissue distribution, expressed in the heart, lung, liver, spleen, brain and in different immune cell types (purified B and T lymphocytes, bone marrow-derived macrophages and dendritic cells).

The protein localises to the cytoplasm. Adapter protein that regulates and/or fission of intracellular vesicles such as lysosomes. Might regulate trafficking of effectors involved in exocytosis. In cytotoxic T-cells and natural killer (NK) cells, has role in the regulation of size, number and exocytosis of lytic granules. In macrophages and dendritic cells, regulates phagosome maturation by controlling the conversion of early phagosomal compartments into late phagosomes. In macrophages and dendritic cells, specifically involved in TLR3- and TLR4-induced production of pro-inflammatory cytokines by regulating the endosomal TLR3- TICAM1/TRIF and TLR4- TICAM1/TRIF signaling pathways. This chain is Lysosomal-trafficking regulator (Lyst), found in Mus musculus (Mouse).